Here is a 145-residue protein sequence, read N- to C-terminus: Bacilliredoxin ABC2045 (145 aa).

The protein belongs to the bacilliredoxin family.

The chain is Bacilliredoxin ABC2045 from Shouchella clausii (strain KSM-K16) (Alkalihalobacillus clausii).